A 418-amino-acid chain; its full sequence is Inward rectifier potassium channel 16 (418 aa).

Topologically, residues M1 to D67 are cytoplasmic. Residues T68–L94 traverse the membrane as a helical segment. Topologically, residues I95–S117 are extracellular. The segment at residues F118–Y134 is an intramembrane region (helical; Pore-forming). Residues T131 to Y136 carry the Selectivity filter motif. The Extracellular segment spans residues G135–C143. A helical membrane pass occupies residues S144–K171. Topologically, residues M172 to M418 are cytoplasmic. Phosphoserine is present on residues S373 and S375.

It belongs to the inward rectifier-type potassium channel (TC 1.A.2.1) family. KCNJ16 subfamily. As to quaternary structure, it forms heteromeric channels with Kir4.1/KCNJ10; this interaction is required for KCNJ16 localization to the basolateral membrane in kidney cells. As a heteromer with KCNJ10, may interact with MAGI1; this interaction may facilitate KCNJ10/KCNJ16 potassium channel expression at the basolateral membrane in kidney cells. May form heteromers with Kir2.1/KCNJ2. Can form heteromeric channels with Kir4.2/KCNJ15. Widely expressed, with highest levels in adult and fetal kidney (at protein level). In the kidney, expressed in the proximal and distal convoluted tubules, but not in glomeruli nor collecting ducts.

It localises to the membrane. The protein resides in the basolateral cell membrane. It carries out the reaction K(+)(in) = K(+)(out). Channel activity is strongly regulated by variations of cytosolic pH; channels are activated by alkaline and inhibited by acidic pH values. Activated by phosphatidylinositol 4,5 biphosphate (PtdIns(4,5)P2). Its function is as follows. Inward rectifier potassium channels are characterized by a greater tendency to allow potassium to flow into the cell rather than out of it. Their voltage dependence is regulated by the concentration of extracellular potassium; as external potassium is raised, the voltage range of the channel opening shifts to more positive voltages. The inward rectification is mainly due to the blockage of outward current by internal magnesium. KCNJ16 may be involved in the regulation of fluid and pH balance. In the kidney, together with KCNJ10, mediates basolateral K(+) recycling in distal tubules; this process is critical for Na(+) reabsorption at the tubules. The chain is Inward rectifier potassium channel 16 (KCNJ16) from Homo sapiens (Human).